Here is a 609-residue protein sequence, read N- to C-terminus: WD repeat-containing protein 1 (609 aa).

WD repeat units follow at residues 6-47, 50-89, 95-137, 140-178, 182-220, 226-265, 272-308, 313-353, 360-410, 434-476, 482-520, 525-563, and 568-606; these read EIKK…IRNI, PAIA…IWDT, LLKY…LWDS, SVGE…FFEG, KFKF…IYDG, VCAL…IWDV, STFN…YLDK, KPLR…YWDS, GFSG…KMDV, MKDK…LYSI, KSDD…VFSV, VEHN…VWTV, and TRIK…EWSI.

This sequence belongs to the WD repeat AIP1 family.

The protein localises to the cytoplasm. It localises to the cytoskeleton. In terms of biological role, induces disassembly of actin filaments in conjunction with ADF/cofilin family proteins. Enhances cofilin-mediated actin severing. This Gallus gallus (Chicken) protein is WD repeat-containing protein 1 (WDR1).